Consider the following 318-residue polypeptide: Ribosomal RNA small subunit methyltransferase H (318 aa).

S-adenosyl-L-methionine is bound by residues Gly37–His39, Asp57, Phe83, Asp104, and Gln111.

This sequence belongs to the methyltransferase superfamily. RsmH family.

It is found in the cytoplasm. The enzyme catalyses cytidine(1402) in 16S rRNA + S-adenosyl-L-methionine = N(4)-methylcytidine(1402) in 16S rRNA + S-adenosyl-L-homocysteine + H(+). Specifically methylates the N4 position of cytidine in position 1402 (C1402) of 16S rRNA. This chain is Ribosomal RNA small subunit methyltransferase H, found in Neisseria gonorrhoeae (strain ATCC 700825 / FA 1090).